A 194-amino-acid chain; its full sequence is Fe/S biogenesis protein NfuA (194 aa).

[4Fe-4S] cluster contacts are provided by C151 and C154.

This sequence belongs to the NfuA family. In terms of assembly, homodimer. Requires [4Fe-4S] cluster as cofactor.

In terms of biological role, involved in iron-sulfur cluster biogenesis. Binds a 4Fe-4S cluster, can transfer this cluster to apoproteins, and thereby intervenes in the maturation of Fe/S proteins. Could also act as a scaffold/chaperone for damaged Fe/S proteins. The protein is Fe/S biogenesis protein NfuA of Photobacterium profundum (strain SS9).